The sequence spans 49 residues: uncharacterized protein (49 aa).

A helical membrane pass occupies residues 17–39 (LLVFDTSLYIPPFMLSFIGYSLS).

It is found in the membrane. This is an uncharacterized protein from Saccharomyces cerevisiae (strain ATCC 204508 / S288c) (Baker's yeast).